A 339-amino-acid chain; its full sequence is Heme A synthase (339 aa).

Helical transmembrane passes span 7 to 27, 92 to 112, 126 to 146, 159 to 179, 199 to 219, 254 to 274, 291 to 311, and 312 to 332; these read VIIW…VGGI, HRFI…YFLI, ILLG…KSGL, LHLT…LDLI, AIII…AGLI, VQFV…FLTF, ALLI…LYSV, and PLWL…TTTY. A heme-binding site is contributed by H258. H319 lines the heme pocket.

Belongs to the COX15/CtaA family. Type 2 subfamily. In terms of assembly, interacts with CtaB. Requires heme b as cofactor.

The protein resides in the cell membrane. It carries out the reaction Fe(II)-heme o + 2 A + H2O = Fe(II)-heme a + 2 AH2. The protein operates within porphyrin-containing compound metabolism; heme A biosynthesis; heme A from heme O: step 1/1. Functionally, catalyzes the conversion of heme O to heme A by two successive hydroxylations of the methyl group at C8. The first hydroxylation forms heme I, the second hydroxylation results in an unstable dihydroxymethyl group, which spontaneously dehydrates, resulting in the formyl group of heme A. In Flavobacterium psychrophilum (strain ATCC 49511 / DSM 21280 / CIP 103535 / JIP02/86), this protein is Heme A synthase.